We begin with the raw amino-acid sequence, 172 residues long: 3-hydroxydecanoyl-[acyl-carrier-protein] dehydratase (172 aa).

Residue His-71 is part of the active site.

It belongs to the thioester dehydratase family. FabA subfamily. As to quaternary structure, homodimer.

It is found in the cytoplasm. It catalyses the reaction a (3R)-hydroxyacyl-[ACP] = a (2E)-enoyl-[ACP] + H2O. The catalysed reaction is (3R)-hydroxydecanoyl-[ACP] = (2E)-decenoyl-[ACP] + H2O. The enzyme catalyses (2E)-decenoyl-[ACP] = (3Z)-decenoyl-[ACP]. Its pathway is lipid metabolism; fatty acid biosynthesis. Necessary for the introduction of cis unsaturation into fatty acids. Catalyzes the dehydration of (3R)-3-hydroxydecanoyl-ACP to E-(2)-decenoyl-ACP and then its isomerization to Z-(3)-decenoyl-ACP. Can catalyze the dehydratase reaction for beta-hydroxyacyl-ACPs with saturated chain lengths up to 16:0, being most active on intermediate chain length. This Vibrio vulnificus (strain CMCP6) protein is 3-hydroxydecanoyl-[acyl-carrier-protein] dehydratase.